A 495-amino-acid chain; its full sequence is UDP-glycosyltransferase 73C5 (495 aa).

A helical membrane pass occupies residues 146–162 (ILFHGMGCFCLLCMHVL). UDP-alpha-D-glucose is bound by residues serine 296, 356 to 358 (SPQ), 373 to 381 (HCGWNSTLE), and 395 to 398 (FADQ). The interval 446-477 (MGESDDAKERRRRAKELGDSAHKAVEEGGSSH) is disordered. The segment covering 450–471 (DDAKERRRRAKELGDSAHKAVE) has biased composition (basic and acidic residues).

It belongs to the UDP-glycosyltransferase family. In terms of tissue distribution, elongating hypocotyls and root-specific. Expressed in the vascular system, in meristematic tissues of the root tip, and in the vasculature of the hypocotyl right after germination. In late stage of flower development, expressed in petals, and in abscission zones.

It is found in the membrane. Functionally, specifically catalyzes 23-O-glucosylation of brassinosteroids, resulting probably in their inactivation. Also, involved in the O-glucosylation of trans-zeatin and dihydrozeatin. Active in vitro on cis-zeatin, dihydrozeatin-9-N-Glc, and olomoucine. Also involved in the detoxification of the Fusarium mycotoxin deoxynivalenol by the transfer of glucose from UDP-glucose to the hydroxyl group at C-3. Possesses low quercetin 7-O-glucosyltransferase and 4'-O-glucosyltransferase activities in vitro. The polypeptide is UDP-glycosyltransferase 73C5 (UGT73C5) (Arabidopsis thaliana (Mouse-ear cress)).